A 492-amino-acid chain; its full sequence is KAT8 regulatory NSL complex subunit 2 (492 aa).

Residue K78 forms a Glycyl lysine isopeptide (Lys-Gly) (interchain with G-Cter in SUMO2) linkage. A disordered region spans residues 126-182 (ELGSQTPESSRSEASRILDEDSWSDGEQEPITVDQTWRGDPDSEADSIDRDQEDPLK). T131 carries the phosphothreonine modification. Positions 135-144 (SRSEASRILD) are enriched in basic and acidic residues. A phosphoserine mark is found at S147, S149, S168, and S172. Residues 162–182 (WRGDPDSEADSIDRDQEDPLK) show a composition bias toward basic and acidic residues. The tract at residues 308-364 (DVRCSNQSLPMTRHCLTHICQDTNRVLFKCCQGSEEVPCNKPVPVSLSEDPCCPLHF) is required for interaction with other NSL complex members. The disordered stretch occupies residues 453-492 (QMAGDGCRSQGPRNSEKAPAPLSQSGIATANGKPEPTSVS).

As to quaternary structure, component of the NSL complex at least composed of KAT8/MOF, KANSL1, KANSL2, KANSL3, MCRS1, PHF20, OGT1/OGT, WDR5 and HCFC1. Ubiquitously expressed.

Its subcellular location is the nucleus. The protein resides in the mitochondrion. Functionally, non-catalytic component of the NSL histone acetyltransferase complex, a multiprotein complex that mediates histone H4 acetylation at 'Lys-5'- and 'Lys-8' (H4K5ac and H4K8ac) at transcription start sites and promotes transcription initiation. Required for NSL complex stability and for transcription of intraciliary transport genes in both ciliated and non-ciliated cells by regulating histone H4 acetylation at 'Lys-5'- and 'Lys-12' (H4K5ac and H4K12ac). This is necessary for cilium assembly in ciliated cells and for organization of the microtubule cytoskeleton in non-ciliated cells. Required within the NSL complex to maintain nuclear architecture stability by promoting KAT8-mediated acetylation of lamin LMNA. The sequence is that of KAT8 regulatory NSL complex subunit 2 (KANSL2) from Capra hircus (Goat).